Reading from the N-terminus, the 297-residue chain is uncharacterized protein (297 aa).

Polar residues predominate over residues 1–12; sequence MASYSFQFSTDA. Residues 1-21 are disordered; sequence MASYSFQFSTDATGKPGAAKP.

This sequence to B.subtilis XkdY/XepA.

This is an uncharacterized protein from Bacillus subtilis (strain 168).